The sequence spans 152 residues: uncharacterized protein (152 aa).

Helical transmembrane passes span 13-33, 38-58, and 69-89; these read LLWFLLVPLVVYALLLLLLFF, LIVEAIPFCYGIALMMISLFM, and WVIFGRFVLVLVVLMLSFFVI.

The protein localises to the cell membrane. This is an uncharacterized protein from Mycoplasma pneumoniae (strain ATCC 29342 / M129 / Subtype 1) (Mycoplasmoides pneumoniae).